A 234-amino-acid polypeptide reads, in one-letter code: Small ribosomal subunit protein uS3 (234 aa).

In terms of domain architecture, KH type-2 spans 39-107 (IRKMLKERLK…EVHLNLVEVR (69 aa)). Basic and acidic residues predominate over residues 215–227 (QERRLQESGEQRA). The tract at residues 215–234 (QERRLQESGEQRARSGRQAA) is disordered.

It belongs to the universal ribosomal protein uS3 family. Part of the 30S ribosomal subunit. Forms a tight complex with proteins S10 and S14.

Binds the lower part of the 30S subunit head. Binds mRNA in the 70S ribosome, positioning it for translation. The chain is Small ribosomal subunit protein uS3 from Maricaulis maris (strain MCS10) (Caulobacter maris).